Reading from the N-terminus, the 138-residue chain is Putative pre-16S rRNA nuclease (138 aa).

This sequence belongs to the YqgF nuclease family.

The protein resides in the cytoplasm. Its function is as follows. Could be a nuclease involved in processing of the 5'-end of pre-16S rRNA. This is Putative pre-16S rRNA nuclease from Salmonella schwarzengrund (strain CVM19633).